The following is a 203-amino-acid chain: Pectinesterase inhibitor 12 (203 aa).

The first 26 residues, 1-26 (MRMSKALAAVVAISVSLSAAAMGVDA), serve as a signal peptide directing secretion. 2 cysteine pairs are disulfide-bonded: C32–C47 and C100–C140.

It belongs to the PMEI family.

The protein resides in the secreted. The protein localises to the extracellular space. It is found in the apoplast. Functionally, pectin methylesterase (PME) inhibitor that inhibits PME in vitro. This Oryza sativa subsp. japonica (Rice) protein is Pectinesterase inhibitor 12.